We begin with the raw amino-acid sequence, 96 residues long: Co-chaperonin GroES (96 aa).

It belongs to the GroES chaperonin family. Heptamer of 7 subunits arranged in a ring. Interacts with the chaperonin GroEL.

Its subcellular location is the cytoplasm. Functionally, together with the chaperonin GroEL, plays an essential role in assisting protein folding. The GroEL-GroES system forms a nano-cage that allows encapsulation of the non-native substrate proteins and provides a physical environment optimized to promote and accelerate protein folding. GroES binds to the apical surface of the GroEL ring, thereby capping the opening of the GroEL channel. This chain is Co-chaperonin GroES, found in Wolbachia sp. subsp. Brugia malayi (strain TRS).